The following is a 525-amino-acid chain: Light-independent protochlorophyllide reductase subunit B (525 aa).

Asp36 provides a ligand contact to [4Fe-4S] cluster. The Proton donor role is filled by Asp292. 428-429 contributes to the substrate binding site; that stretch reads GL. A disordered region spans residues 447 to 470; that stretch reads PSASSENGSAPLSAGTATPAAAPE. A compositionally biased stretch (low complexity) spans 460-470; that stretch reads AGTATPAAAPE.

Belongs to the ChlB/BchB/BchZ family. As to quaternary structure, protochlorophyllide reductase is composed of three subunits; BchL, BchN and BchB. Forms a heterotetramer of two BchB and two BchN subunits. Requires [4Fe-4S] cluster as cofactor.

The catalysed reaction is chlorophyllide a + oxidized 2[4Fe-4S]-[ferredoxin] + 2 ADP + 2 phosphate = protochlorophyllide a + reduced 2[4Fe-4S]-[ferredoxin] + 2 ATP + 2 H2O. It functions in the pathway porphyrin-containing compound metabolism; bacteriochlorophyll biosynthesis (light-independent). In terms of biological role, component of the dark-operative protochlorophyllide reductase (DPOR) that uses Mg-ATP and reduced ferredoxin to reduce ring D of protochlorophyllide (Pchlide) to form chlorophyllide a (Chlide). This reaction is light-independent. The NB-protein (BchN-BchB) is the catalytic component of the complex. In Chlorobium luteolum (strain DSM 273 / BCRC 81028 / 2530) (Pelodictyon luteolum), this protein is Light-independent protochlorophyllide reductase subunit B.